Consider the following 347-residue polypeptide: Terpene synthase 2 (347 aa).

D103, N247, S251, and E255 together coordinate Mg(2+). A D(D/E)XX(D/E) motif motif is present at residues 103-107; it reads DDLLE. The short motif at 247–255 is the NSE motif element; it reads NDIFSLKKE. Positions 329–336 match the WxxxxxRY motif motif; it reads WCSKSTRY.

This sequence belongs to the terpene synthase family. Requires Mg(2+) as cofactor.

Its function is as follows. Terpene synthase that may be involved in the production of volatile terpenoids. Does not show detectable terpene products with either farnesyl diphosphate (FPP) or geranyl diphosphate (GPP). P.polycephalum has a unique biology and these volatile terpenoids could function in internal communication of P.polycephalum, to mark the territory that have been explored, or they may be involved in chemotaxis. The polypeptide is Terpene synthase 2 (Physarum polycephalum (Slime mold)).